Here is a 204-residue protein sequence, read N- to C-terminus: High frequency lysogenization protein HflD homolog (204 aa).

Belongs to the HflD family.

The protein localises to the cytoplasm. The protein resides in the cell inner membrane. This is High frequency lysogenization protein HflD homolog from Aeromonas hydrophila subsp. hydrophila (strain ATCC 7966 / DSM 30187 / BCRC 13018 / CCUG 14551 / JCM 1027 / KCTC 2358 / NCIMB 9240 / NCTC 8049).